Here is a 994-residue protein sequence, read N- to C-terminus: NACHT, LRR and PYD domains-containing protein 4 (994 aa).

Residues 1 to 94 (MAASFFSDFG…CMKVMRERTG (94 aa)) form the Pyrin domain. Residues 149–472 (RTVIIQGPQG…FYLLKSHLDH (324 aa)) enclose the NACHT domain. 155–162 (GPQGIGKT) contacts ATP. LRR repeat units lie at residues 637–660 (SGHL…TWCN), 698–721 (YLSF…LNYP), 722–745 (AGNV…VLAG), 750–777 (NKKL…LCSP), 806–833 (NKSV…ALKH), 863–886 (NQNL…LLCR), 920–943 (SKTL…VLCE), and 949–972 (ECAL…LLTA).

The protein belongs to the NLRP family. As to quaternary structure, interacts with CHUK/IKKA, inhibiting its kinase activity.

In terms of biological role, may be involved in inflammation and recognition of cytosolic pathogen-associated molecular patterns (PAMPs) not intercepted by membrane-bound receptors. Acts as a negative regulator of the type I interferon signaling pathway by serving as an adapter to promote DTX4-mediated ubiquitination of activated TBK1, and its subsequent degradation. Suppresses NF-kappaB induction by the cytokines TNFA and IL1B, suggesting that it operates at a point of convergence in these two cytokine signaling pathways. The sequence is that of NACHT, LRR and PYD domains-containing protein 4 from Homo sapiens (Human).